We begin with the raw amino-acid sequence, 442 residues long: METLWDGILSHLKGRLSRPTFETWIKPATAQQFEQDCLIIRTPNPFARSWLQQHYAGAIAQAGEQVIGRPIQVDFIVSEQSEEALKPVIEREPAPAAPPANVASLNSKYTFSRFVVGANNRMAHVAALAVAEMPGCNYNPLFLCGGVGLGKTHLMQAIGHYRLDIDTRTKIAYVSTERFANELIEAIRRDAMQTFREHYRRVDLLMIDDIQFIEGKEYTQEEFFHTFNALYESGKQIVIASDRPPQLIPRLQERLSSRFSMGLITDIQQPDIETRMAILQKKAEYENMFVPQDVIHHIASAYTTNIRELEGALIRAVAYVSISGLPMTVETISPILSPPRTRGEITDEAILELVCDELKVSAEDMRSDSRRRDISQARQLCMYLLRKYTDLSLPKIGQALGGKDHTTVLYAIDKIEQSKIRDPEVQRLLQRLGNRLEADARH.

A domain I, interacts with DnaA modulators region spans residues 1–69 (METLWDGILS…AQAGEQVIGR (69 aa)). The interval 69–103 (RPIQVDFIVSEQSEEALKPVIEREPAPAAPPANVA) is domain II. The domain III, AAA+ region stretch occupies residues 104–320 (SLNSKYTFSR…GALIRAVAYV (217 aa)). ATP contacts are provided by glycine 148, glycine 150, lysine 151, and threonine 152. Residues 321–442 (SISGLPMTVE…GNRLEADARH (122 aa)) form a domain IV, binds dsDNA region.

This sequence belongs to the DnaA family. Oligomerizes as a right-handed, spiral filament on DNA at oriC.

The protein localises to the cytoplasm. Functionally, plays an essential role in the initiation and regulation of chromosomal replication. ATP-DnaA binds to the origin of replication (oriC) to initiate formation of the DNA replication initiation complex once per cell cycle. Binds the DnaA box (a 9 base pair repeat at the origin) and separates the double-stranded (ds)DNA. Forms a right-handed helical filament on oriC DNA; dsDNA binds to the exterior of the filament while single-stranded (ss)DNA is stabiized in the filament's interior. The ATP-DnaA-oriC complex binds and stabilizes one strand of the AT-rich DNA unwinding element (DUE), permitting loading of DNA polymerase. After initiation quickly degrades to an ADP-DnaA complex that is not apt for DNA replication. Binds acidic phospholipids. The polypeptide is Chromosomal replication initiator protein DnaA (Gloeobacter violaceus (strain ATCC 29082 / PCC 7421)).